The following is a 377-amino-acid chain: uncharacterized protein (377 aa).

Residues 21 to 43 (YFISFSALFLIAYMFVAAVPLGA) traverse the membrane as a helical segment.

The protein resides in the membrane. This is an uncharacterized protein from Treponema pallidum (strain Nichols).